Consider the following 291-residue polypeptide: 4-hydroxybenzoate octaprenyltransferase (291 aa).

The next 8 helical transmembrane spans lie at 23-43 (PIGT…AADG), 47-67 (PALV…GCAI), 98-118 (LAVA…LNAL), 139-159 (FFAI…PMAY), 171-191 (WLML…YAMV), 216-236 (IMLC…ALAL), 238-258 (AAYW…YTLL), and 267-287 (FFVF…AALA).

This sequence belongs to the UbiA prenyltransferase family. It depends on Mg(2+) as a cofactor.

The protein resides in the cell inner membrane. It catalyses the reaction all-trans-octaprenyl diphosphate + 4-hydroxybenzoate = 4-hydroxy-3-(all-trans-octaprenyl)benzoate + diphosphate. The protein operates within cofactor biosynthesis; ubiquinone biosynthesis. In terms of biological role, catalyzes the prenylation of para-hydroxybenzoate (PHB) with an all-trans polyprenyl group. Mediates the second step in the final reaction sequence of ubiquinone-8 (UQ-8) biosynthesis, which is the condensation of the polyisoprenoid side chain with PHB, generating the first membrane-bound Q intermediate 3-octaprenyl-4-hydroxybenzoate. This Ralstonia nicotianae (strain ATCC BAA-1114 / GMI1000) (Ralstonia solanacearum) protein is 4-hydroxybenzoate octaprenyltransferase.